The sequence spans 1023 residues: Transmembrane protein 132A (1023 aa).

An N-terminal signal peptide occupies residues 1–35 (MCARMAGRTTAAPRGPYGPWLCLLVALALDVVRVD). At 36–852 (CGQAPLDPVY…VTELELGMYA (817 aa)) the chain is on the extracellular side. The disordered stretch occupies residues 212–246 (AAEGPGGCGSGEENDPGEQALPVGGVELRPADPPQ). Asn280 is a glycosylation site (N-linked (GlcNAc...) asparagine). 2 disordered regions span residues 512-533 (WRVP…DEAE) and 766-839 (LPPA…MVPA). The span at 515–527 (PGPAEGPAEPAAE) shows a compositional bias: low complexity. Ser529 is modified (phosphoserine; by FAM20C). Positions 611–916 (IEVRSPLSDS…RQLDRQSPGP (306 aa)) are binds to HSPA5/GRP78. Residues 671 to 1023 (LPAPKQEVAL…NYMERIRGSS (353 aa)) form a confers cellular localization similar to full-length form region. Low complexity predominate over residues 778–790 (SSPAWSPPATEAT). Positions 809–823 (GKFERAEEEARKEET) are enriched in basic and acidic residues. Over residues 824-836 (EAREEEEEEEEEM) the composition is skewed to acidic residues. A helical transmembrane segment spans residues 853-873 (LLGVFCVAIFIFLVNGVVFVL). At 874–1023 (RYQRKEPPDS…NYMERIRGSS (150 aa)) the chain is on the cytoplasmic side. The segment at 905-961 (LSRQLDRQSPGPPKGEGSCPCESGGGGEAPTLAPGPPGGTTSSSSTLARKEAGGRRK) is disordered.

The protein belongs to the TMEM132 family. In terms of assembly, interacts with HSPA5/GRP78.

The protein localises to the golgi apparatus membrane. The protein resides in the endoplasmic reticulum membrane. In terms of biological role, may play a role in embryonic and postnatal development of the brain. Increased resistance to cell death induced by serum starvation in cultured cells. Regulates cAMP-induced GFAP gene expression via STAT3 phosphorylation. This is Transmembrane protein 132A (TMEM132A) from Homo sapiens (Human).